The sequence spans 225 residues: C-reactive protein (225 aa).

The N-terminal stretch at 1–18 (MLVVFLCLLSVTLEATEG) is a signal peptide. Residues 23-225 (SGKVLQFKTA…TGNVLVATDN (203 aa)) form the Pentraxin (PTX) domain. Residues Cys-54 and Cys-116 are joined by a disulfide bond. Residues Asp-78, Asp-157, Pro-158, Asp-159, and Gln-169 each contribute to the Ca(2+) site.

This sequence belongs to the pentraxin family. As to quaternary structure, homotrimer. The cofactor is Ca(2+).

Its subcellular location is the secreted. Its function is as follows. Displays several functions associated with host defense: it promotes agglutination, bacterial capsular swelling, phagocytosis, and complement fixation through its calcium-dependent binding to phosphorylcholine. This is C-reactive protein from Danio rerio (Zebrafish).